The sequence spans 466 residues: UDP-N-acetylmuramate--L-alanine ligase (466 aa).

119–125 (GTHGKTT) provides a ligand contact to ATP.

Belongs to the MurCDEF family.

Its subcellular location is the cytoplasm. It carries out the reaction UDP-N-acetyl-alpha-D-muramate + L-alanine + ATP = UDP-N-acetyl-alpha-D-muramoyl-L-alanine + ADP + phosphate + H(+). It functions in the pathway cell wall biogenesis; peptidoglycan biosynthesis. Functionally, cell wall formation. The chain is UDP-N-acetylmuramate--L-alanine ligase from Cytophaga hutchinsonii (strain ATCC 33406 / DSM 1761 / CIP 103989 / NBRC 15051 / NCIMB 9469 / D465).